We begin with the raw amino-acid sequence, 716 residues long: FLYWCH-type zinc finger-containing protein 1 (716 aa).

The segment at 1 to 35 (MPLPEPSEQEGESVKAGQEPSPKPGTDVIPAAPRK) is disordered. The residue at position 21 (serine 21) is a Phosphoserine. Residues 116 to 174 (FLRTPFGGRLLVLESFLYKQEKAVGDKVYWKCRQHAELGCRGRAITRGLRATVMRGHCH) form an FLYWCH-type 1 zinc finger. Residue lysine 134 forms a Glycyl lysine isopeptide (Lys-Gly) (interchain with G-Cter in SUMO2) linkage. A disordered region spans residues 191 to 231 (PSLALPEGLGEPQGPEGPGGRVEEPLEGVGPWQCPEEPEPT). The span at 195 to 204 (LPEGLGEPQG) shows a compositional bias: low complexity. Serine 261 bears the Phosphoserine mark. The FLYWCH-type 2 zinc-finger motif lies at 273-331 (FLRTCYGGSFLVHESFLYKREKAVGDKVYWTCRDHALHGCRSRAITQGQRVTVMRGHCH). Serine 371 carries the phosphoserine modification. Residues 377–421 (GPGPLTLTRPRPRKRAKVEDQELPTQPEAPDEHQDMDADPGGPEF) are disordered. Lysine 393 is covalently cross-linked (Glycyl lysine isopeptide (Lys-Gly) (interchain with G-Cter in SUMO2)). The FLYWCH-type 3 zinc-finger motif lies at 421-479 (FLKTPLGGSFLVYESFLYRREKAAGEKVYWTCRDQARMGCRSRAITQGRRVTVMRGHCH). Position 503 is a phosphoserine (serine 503). The FLYWCH-type 4 zinc finger occupies 509 to 567 (FLKTPLGGSFLVYESFLYRREKAAGEKVYWTCRDQARMGCRSRAITQGRRVMVMRRHCH). Serine 591 is subject to Phosphoserine. The segment at 600–658 (FLRTSLGGRFLVHESFLYRKEKAAGEKVYWMCRDQARLGCRSRAITQGHRIMVMRSHCH) adopts an FLYWCH-type 5 zinc-finger fold. Lysine 685 is covalently cross-linked (Glycyl lysine isopeptide (Lys-Gly) (interchain with G-Cter in SUMO2)). A Phosphoserine modification is found at serine 696.

As to quaternary structure, interacts with CTNNB1 (when unphosphorylated), perhaps preventing interaction of CTNNB1 with TCF4, and thereby regulating transcription activation; phosphorylation of CTNNB1 may inhibit the interaction.

Its subcellular location is the nucleus. It is found in the chromosome. The protein localises to the centromere. Functionally, transcription cofactor. Negatively regulates transcription activation by catenin beta-1 CTNNB1, perhaps acting by competing with TCF4 for CTNNB1 binding. May play a role in DNA-damage response signaling. Binds specifically to DNA sequences at peri-centromeric chromatin loci. This chain is FLYWCH-type zinc finger-containing protein 1 (FLYWCH1), found in Homo sapiens (Human).